The sequence spans 331 residues: Ferredoxin--NADP reductase (331 aa).

Residues E34, Q42, Y47, V87, F120, D285, and T325 each contribute to the FAD site.

Belongs to the ferredoxin--NADP reductase type 2 family. Homodimer. It depends on FAD as a cofactor.

The enzyme catalyses 2 reduced [2Fe-2S]-[ferredoxin] + NADP(+) + H(+) = 2 oxidized [2Fe-2S]-[ferredoxin] + NADPH. This Levilactobacillus brevis (strain ATCC 367 / BCRC 12310 / CIP 105137 / JCM 1170 / LMG 11437 / NCIMB 947 / NCTC 947) (Lactobacillus brevis) protein is Ferredoxin--NADP reductase.